The following is a 505-amino-acid chain: tRNA-2-methylthio-N(6)-dimethylallyladenosine synthase (505 aa).

The MTTase N-terminal domain maps to Arg14–Val132. Residues Cys23, Cys61, Cys95, Cys169, Cys173, and Cys176 each coordinate [4Fe-4S] cluster. One can recognise a Radical SAM core domain in the interval Arg155–Glu386. A TRAM domain is found at Lys388–Val456.

This sequence belongs to the methylthiotransferase family. MiaB subfamily. In terms of assembly, monomer. Requires [4Fe-4S] cluster as cofactor.

Its subcellular location is the cytoplasm. It carries out the reaction N(6)-dimethylallyladenosine(37) in tRNA + (sulfur carrier)-SH + AH2 + 2 S-adenosyl-L-methionine = 2-methylsulfanyl-N(6)-dimethylallyladenosine(37) in tRNA + (sulfur carrier)-H + 5'-deoxyadenosine + L-methionine + A + S-adenosyl-L-homocysteine + 2 H(+). Catalyzes the methylthiolation of N6-(dimethylallyl)adenosine (i(6)A), leading to the formation of 2-methylthio-N6-(dimethylallyl)adenosine (ms(2)i(6)A) at position 37 in tRNAs that read codons beginning with uridine. In Streptomyces viridosporus (strain ATCC 14672 / DSM 40746 / JCM 4963 / KCTC 9882 / NRRL B-12104 / FH 1290) (Streptomyces ghanaensis), this protein is tRNA-2-methylthio-N(6)-dimethylallyladenosine synthase.